Reading from the N-terminus, the 195-residue chain is Erythropoietin (195 aa).

Residues 1–28 form the signal peptide; the sequence is MGVRGRLALLPLALLCLLVLALGLPVLG. 2 disulfides stabilise this stretch: Cys35–Cys190 and Cys57–Cys61. Asn52 carries N-linked (GlcNAc...) asparagine glycosylation. N-linked (GlcNAc...) asparagine glycans are attached at residues Asn66 and Asn111.

The protein belongs to the EPO/TPO family.

It is found in the secreted. In terms of biological role, hormone involved in the regulation of erythrocyte proliferation and differentiation and the maintenance of a physiological level of circulating erythrocyte mass. Binds to EPOR leading to EPOR dimerization and JAK2 activation thereby activating specific downstream effectors, including STAT1 and STAT3. The chain is Erythropoietin (EPO) from Oryctolagus cuniculus (Rabbit).